We begin with the raw amino-acid sequence, 550 residues long: MPPPRTGRGLLWLGLVLSSVCVALGSETQANSTTDALNVLLIIVDDLRPSLGCYGDKLVRSPNIDQLASHSLLFQNAFAQQAVCAPSRVSFLTGRRPDTTRLYDFNSYWRVHAGNFSTIPQYFKENGYVTMSVGKVFHPGISSNHTDDSPYSWSFPPYHPSSEKYENTKTCRGPDGELHANLLCPVDVLDVPEGTLPDKQSTEQAIQLLEKMKTSASPFFLAVGYHKPHIPFRYPKEFQKLYPLENITLAPDPEVPDGLPPVAYNPWMDIRQREDVQALNISVPYGPIPVDFQRKIRQSYFASVSYLDTQVGRLLSALDDLQLANSTIIAFTSDHGWALGEHGEWAKYSNFDVATHVPLIFYVPGRTASLPEAGEKLFPYLDPFDSASQLMEPGRQSMDLVELVSLFPTLAGLAGLQVPPRCPVPSFHVELCREGKNLLKHFRFRDLEEDPYLPGNPRELIAYSQYPRPSDIPQWNSDKPSLKDIKIMGYSIRTIDYRYTVWVGFNPDEFLANFSDIHAGELYFVDSDPLQDHNMYNDSQGGDLFQLLMP.

Residues 1 to 25 (MPPPRTGRGLLWLGLVLSSVCVALG) form the signal peptide. The propeptide occupies 26–33 (SETQANST). Residues D45, D46, and C84 each coordinate Ca(2+). Residue C84 is the Nucleophile of the active site. The residue at position 84 (C84) is a 3-oxoalanine (Cys). An N-linked (GlcNAc...) asparagine glycan is attached at N115. The active site involves H138. N144 is a glycosylation site (N-linked (GlcNAc...) asparagine). The cysteines at positions 171 and 184 are disulfide-linked. 3 N-linked (GlcNAc...) asparagine glycosylation sites follow: N246, N280, and N325. D334 and H335 together coordinate Ca(2+). C422 and C432 are oxidised to a cystine. N-linked (GlcNAc...) asparagine glycans are attached at residues N513 and N537.

The protein belongs to the sulfatase family. In terms of assembly, monomer. The 58-kDa mature form is composed of two chains resulting from proteolitic processing, the 42-kDa chain and the 14-kDa chain that remain stably associated and form the 58-kDa intermediate form which is enzymatically active. Ca(2+) is required as a cofactor. In terms of processing, synthesized as a 75-kDa precursor form in the endoplasmic reticulum (ER), and then processed by proteolytic cleavage through various intermediates to yield a 55-kDa mature form, with the release of an 18 kDa polypeptide. Post-translationally, the conversion to 3-oxoalanine (also known as C-formylglycine, FGly), of a serine or cysteine residue in prokaryotes and of a cysteine residue in eukaryotes, is critical for catalytic activity. In terms of tissue distribution, liver, kidney, lung, and placenta.

It localises to the lysosome. It carries out the reaction Hydrolysis of the 2-sulfate groups of the L-iduronate 2-sulfate units of dermatan sulfate, heparan sulfate and heparin.. Lysosomal enzyme involved in the degradation pathway of dermatan sulfate and heparan sulfate. In Homo sapiens (Human), this protein is Iduronate 2-sulfatase (IDS).